The primary structure comprises 176 residues: Jacalin-related lectin 19 (176 aa).

The Jacalin-type lectin domain maps to 12-154 (TVFVGPWGGN…LDSIGFHLSR (143 aa)).

It belongs to the jacalin lectin family.

The protein is Jacalin-related lectin 19 (JAL19) of Arabidopsis thaliana (Mouse-ear cress).